Reading from the N-terminus, the 350-residue chain is Phosphoribosylformylglycinamidine cyclo-ligase (350 aa).

It belongs to the AIR synthase family.

The protein localises to the cytoplasm. It catalyses the reaction 2-formamido-N(1)-(5-O-phospho-beta-D-ribosyl)acetamidine + ATP = 5-amino-1-(5-phospho-beta-D-ribosyl)imidazole + ADP + phosphate + H(+). It functions in the pathway purine metabolism; IMP biosynthesis via de novo pathway; 5-amino-1-(5-phospho-D-ribosyl)imidazole from N(2)-formyl-N(1)-(5-phospho-D-ribosyl)glycinamide: step 2/2. The polypeptide is Phosphoribosylformylglycinamidine cyclo-ligase (Nitratidesulfovibrio vulgaris (strain DSM 19637 / Miyazaki F) (Desulfovibrio vulgaris)).